The chain runs to 228 residues: Probable 26S proteasome regulatory subunit p28 (228 aa).

ANK repeat units follow at residues 1–30 (MSNYPLHQACMENEFFKVQELLHSKPSLLL), 35–64 (DGRIPLHWSVSFQAHEITSFLLSKMENVNL), 71–100 (SGWTPFHIACSVGNLEVVKSLYDRPLKPDL), 106–135 (QGVTCLHLAVGKKWFEVSQFLIENGASVRI), 139–168 (FNQIPLHRAASVGSLKLIELLCGLGKSAVN), and 173–203 (QGWTPLFHALAEGHGDAAVLLVEKYGAEYDL).

In terms of assembly, interacts with RPT3.

Acts as a chaperone during the assembly of the 26S proteasome, specifically of the 19S regulatory complex (RC) and appears to have an overlapping role with RPN14. This is Probable 26S proteasome regulatory subunit p28 (NAS6) from Saccharomyces cerevisiae (strain ATCC 204508 / S288c) (Baker's yeast).